A 120-amino-acid chain; its full sequence is Large ribosomal subunit protein uL18 (120 aa).

Belongs to the universal ribosomal protein uL18 family. As to quaternary structure, part of the 50S ribosomal subunit; part of the 5S rRNA/L5/L18/L25 subcomplex. Contacts the 5S and 23S rRNAs.

In terms of biological role, this is one of the proteins that bind and probably mediate the attachment of the 5S RNA into the large ribosomal subunit, where it forms part of the central protuberance. This Bacillus pumilus (strain SAFR-032) protein is Large ribosomal subunit protein uL18.